Here is a 193-residue protein sequence, read N- to C-terminus: Potassium-transporting ATPase KdpC subunit (193 aa).

The chain crosses the membrane as a helical span at residues 11–31; the sequence is FTLVFMVLLGLVYPFVMTGIA.

This sequence belongs to the KdpC family. In terms of assembly, the system is composed of three essential subunits: KdpA, KdpB and KdpC.

It localises to the cell membrane. Part of the high-affinity ATP-driven potassium transport (or Kdp) system, which catalyzes the hydrolysis of ATP coupled with the electrogenic transport of potassium into the cytoplasm. This subunit acts as a catalytic chaperone that increases the ATP-binding affinity of the ATP-hydrolyzing subunit KdpB by the formation of a transient KdpB/KdpC/ATP ternary complex. This chain is Potassium-transporting ATPase KdpC subunit, found in Caldanaerobacter subterraneus subsp. tengcongensis (strain DSM 15242 / JCM 11007 / NBRC 100824 / MB4) (Thermoanaerobacter tengcongensis).